A 249-amino-acid polypeptide reads, in one-letter code: MAAQATGGRATQRSQQSPAKPKGLTVRQKKILETIQRSVNDNGYPPSMREIGDTVGLASLSSVTHQLSQLEKLGYLRRDPKRPRAMEVLMPLTLDEGTAKISGVEKPARLRTIGGLAVSELATATDTAMVPLVGRIAAGGPILADQVVEDVMPLPRQLVGHGELFMLKVTGDSMIDAAICDGDWVVVRRQSDAVNGDIVAALLDDEATVKTFRQRDGHTWLLPQNTQYEPILGDHANIMGKVVSVFRSL.

The disordered stretch occupies residues M1–V26. The segment covering R9–P18 has biased composition (polar residues). The H-T-H motif DNA-binding region spans M48–S68. Catalysis depends on for autocatalytic cleavage activity residues S173 and K210.

Belongs to the peptidase S24 family. Homodimer.

It carries out the reaction Hydrolysis of Ala-|-Gly bond in repressor LexA.. Its function is as follows. Represses a number of genes involved in the response to DNA damage (SOS response), including recA and lexA. In the presence of single-stranded DNA, RecA interacts with LexA causing an autocatalytic cleavage which disrupts the DNA-binding part of LexA, leading to derepression of the SOS regulon and eventually DNA repair. The chain is LexA repressor from Arthrobacter sp. (strain FB24).